The chain runs to 283 residues: 3-methyl-2-oxobutanoate hydroxymethyltransferase (283 aa).

Mg(2+)-binding residues include Asp-44 and Asp-83. Residues 44–45, Asp-83, and Lys-112 each bind 3-methyl-2-oxobutanoate; that span reads DS. Glu-114 lines the Mg(2+) pocket. Glu-181 serves as the catalytic Proton acceptor.

This sequence belongs to the PanB family. As to quaternary structure, homodecamer; pentamer of dimers. Mg(2+) is required as a cofactor.

The protein localises to the cytoplasm. It catalyses the reaction 3-methyl-2-oxobutanoate + (6R)-5,10-methylene-5,6,7,8-tetrahydrofolate + H2O = 2-dehydropantoate + (6S)-5,6,7,8-tetrahydrofolate. It functions in the pathway cofactor biosynthesis; coenzyme A biosynthesis. Functionally, catalyzes the reversible reaction in which hydroxymethyl group from 5,10-methylenetetrahydrofolate is transferred onto alpha-ketoisovalerate to form ketopantoate. This is 3-methyl-2-oxobutanoate hydroxymethyltransferase from Pyrococcus furiosus (strain ATCC 43587 / DSM 3638 / JCM 8422 / Vc1).